Reading from the N-terminus, the 600-residue chain is Aspartate--tRNA(Asp/Asn) ligase (600 aa).

E174 is a binding site for L-aspartate. The aspartate stretch occupies residues Q198–K201. R220 lines the L-aspartate pocket. Residues R220–E222 and Q229 contribute to the ATP site. Residue H457 participates in L-aspartate binding. E491 serves as a coordination point for ATP. Residue R498 coordinates L-aspartate. G543 to R546 lines the ATP pocket.

Belongs to the class-II aminoacyl-tRNA synthetase family. Type 1 subfamily. Homodimer.

Its subcellular location is the cytoplasm. The catalysed reaction is tRNA(Asx) + L-aspartate + ATP = L-aspartyl-tRNA(Asx) + AMP + diphosphate. Its function is as follows. Aspartyl-tRNA synthetase with relaxed tRNA specificity since it is able to aspartylate not only its cognate tRNA(Asp) but also tRNA(Asn). Reaction proceeds in two steps: L-aspartate is first activated by ATP to form Asp-AMP and then transferred to the acceptor end of tRNA(Asp/Asn). The polypeptide is Aspartate--tRNA(Asp/Asn) ligase (Burkholderia orbicola (strain MC0-3)).